The chain runs to 488 residues: F-box protein At3g60790 (488 aa).

Residues 1-21 are disordered; it reads MTTQSSSSSSSLPSSLSSTPP. In terms of domain architecture, F-box spans 49–95; it reads VDRISMLPDEMLQKILSTLSTKDAVITSTLSKRWVDQWKRIPHLCVD.

The polypeptide is F-box protein At3g60790 (Arabidopsis thaliana (Mouse-ear cress)).